The sequence spans 255 residues: MNTARLNQGTPLLLNAVSKHYAENIVLNQLDLHIPAGQFVAVVGRSGGGKSTLLRLLAGLETPTAGDVLAGTTPLAEIQDDTRMMFQDARLLPWKSVIDNVGLGLKGQWHDAARQALAAVGLVNRAGEWPAALSGGQKQRVALARALIHRPGLLLLDEPLGALDALTRLEMQDLIVSLWQEHGFTVLLVTHDVSEAVAMADRVLLIEEGKIGLDLTVDIPRPRRLGSVRLAELEAEVLQRVMQRGHSEQPIRRHG.

Residues 12–233 enclose the ABC transporter domain; that stretch reads LLLNAVSKHY…RLGSVRLAEL (222 aa). Position 44 to 51 (44 to 51) interacts with ATP; that stretch reads GRSGGGKS.

This sequence belongs to the ABC transporter superfamily. Aliphatic sulfonates importer (TC 3.A.1.17.2) family. In terms of assembly, the complex is composed of two ATP-binding proteins (SsuB), two transmembrane proteins (SsuC) and a solute-binding protein (SsuA).

It localises to the cell inner membrane. The catalysed reaction is ATP + H2O + aliphatic sulfonate-[sulfonate-binding protein]Side 1 = ADP + phosphate + aliphatic sulfonateSide 2 + [sulfonate-binding protein]Side 1.. Part of the ABC transporter complex SsuABC involved in aliphatic sulfonates import. Responsible for energy coupling to the transport system. This Escherichia coli O6:K15:H31 (strain 536 / UPEC) protein is Aliphatic sulfonates import ATP-binding protein SsuB.